A 154-amino-acid polypeptide reads, in one-letter code: Probable cyclic pyranopterin monophosphate synthase (154 aa).

Residues 74-76 (LCH) and 110-111 (ME) contribute to the substrate site. The active site involves aspartate 125.

This sequence belongs to the MoaC family. As to quaternary structure, homohexamer; trimer of dimers.

It carries out the reaction (8S)-3',8-cyclo-7,8-dihydroguanosine 5'-triphosphate = cyclic pyranopterin phosphate + diphosphate. It functions in the pathway cofactor biosynthesis; molybdopterin biosynthesis. Catalyzes the conversion of (8S)-3',8-cyclo-7,8-dihydroguanosine 5'-triphosphate to cyclic pyranopterin monophosphate (cPMP). The polypeptide is Probable cyclic pyranopterin monophosphate synthase (Methanosphaerula palustris (strain ATCC BAA-1556 / DSM 19958 / E1-9c)).